A 116-amino-acid polypeptide reads, in one-letter code: Putative pterin-4-alpha-carbinolamine dehydratase (116 aa).

Belongs to the pterin-4-alpha-carbinolamine dehydratase family.

The enzyme catalyses (4aS,6R)-4a-hydroxy-L-erythro-5,6,7,8-tetrahydrobiopterin = (6R)-L-erythro-6,7-dihydrobiopterin + H2O. This is Putative pterin-4-alpha-carbinolamine dehydratase from Paracidovorax citrulli (strain AAC00-1) (Acidovorax citrulli).